The chain runs to 118 residues: Protein YLR162W (118 aa).

Over residues 1-20 (MQHTLTRTASLPERSSSAHS) the composition is skewed to polar residues. A disordered region spans residues 1–26 (MQHTLTRTASLPERSSSAHSAATALP). Residues 38-58 (LVPLLCIFWFVFVSMSPLPPA) form a helical membrane-spanning segment.

Its subcellular location is the membrane. Overexpression confers resistance to the antimicrobial peptide MiAMP1. In Saccharomyces cerevisiae (strain ATCC 204508 / S288c) (Baker's yeast), this protein is Protein YLR162W.